Here is a 1088-residue protein sequence, read N- to C-terminus: Calcium-transporting ATPase 5, plasma membrane-type (1088 aa).

The segment covering 1-11 has biased composition (low complexity); that stretch reads MESASSSLATS. The tract at residues 1 to 32 is disordered; the sequence is MESASSSLATSGRRRSSSGGGGGSWGSIGSAA. Over 1 to 198 the chain is Cytoplasmic; it reads MESASSSLAT…FLWDACKDLT (198 aa). A helical transmembrane segment spans residues 199 to 219; it reads LIILMVAAAVSLALGITTEGI. Over 220–221 the chain is Extracellular; it reads KE. Residues 222 to 242 form a helical membrane-spanning segment; the sequence is GWYDGASIAFAVLLVVVVTAT. The Cytoplasmic segment spans residues 243 to 338; it reads SDYKQSLQFQ…MSGCKVADGY (96 aa). Residues 339-359 form a helical membrane-spanning segment; it reads GTMLVTAVGINTEWGLLMASI. The Extracellular portion of the chain corresponds to 360–375; sequence SEDSGEETPLQVRLNG. The chain crosses the membrane as a helical span at residues 376-396; the sequence is VATFIGMVGLSVALAVLVVLL. Topologically, residues 397–425 are cytoplasmic; it reads ARYFTGHTYNPDGSVQYVKGKMGVGQTIR. The chain crosses the membrane as a helical span at residues 426 to 446; it reads GIVGIFTVAVTIVVVAVPEGL. Residues 447–851 lie on the Extracellular side of the membrane; that stretch reads PLAVTLTLAF…GRSVYANIQK (405 aa). Catalysis depends on Asp-486, which acts as the 4-aspartylphosphate intermediate. Asn-532, Asn-569, and Asn-737 each carry an N-linked (GlcNAc...) asparagine glycan. Asp-794 and Asp-798 together coordinate Mg(2+). Residues 852-872 form a helical membrane-spanning segment; it reads FIQFQLTVNVAALIINVVAAV. Over 873-880 the chain is Cytoplasmic; the sequence is SSGNVPLN. A helical transmembrane segment spans residues 881 to 901; the sequence is AVQLLWVNLIMDTLGALALAT. Topologically, residues 902 to 919 are extracellular; it reads EPPTDHLMQRPPVGRREP. The helical transmembrane segment at 920–940 threads the bilayer; the sequence is LITNVMWRNLIIMALFQVIVL. The Cytoplasmic portion of the chain corresponds to 941-1000; that stretch reads LTLNFRGTSLLQLKNDNQAHADKVKNTFIFNTFVLCQVFNEFNARKPDELNIFKGITGNH. Residues 1001–1021 traverse the membrane as a helical segment; sequence LFMAIVAITVVLQALIVEFLG. Residues 1022-1030 lie on the Extracellular side of the membrane; the sequence is KFTSTTRLT. Residues 1031-1051 traverse the membrane as a helical segment; the sequence is WQLWLVSIGLAFFSWPLAFVG. At 1052–1088 the chain is on the cytoplasmic side; that stretch reads KLIPVPERPLGDFFACCCPGSKQAADAKGDDADHSDV.

It belongs to the cation transport ATPase (P-type) (TC 3.A.3) family. Type IIB subfamily. As to quaternary structure, interacts with NOH1.

Its subcellular location is the cell membrane. The catalysed reaction is Ca(2+)(in) + ATP + H2O = Ca(2+)(out) + ADP + phosphate + H(+). Activated by calmodulin. Functionally, this magnesium-dependent enzyme catalyzes the hydrolysis of ATP coupled with the translocation of calcium from the cytosol out of the cell, into the endoplasmic reticulum, or into organelles. Involved in salt and drought stress tolerance. Involved in cold stress tolerance. This chain is Calcium-transporting ATPase 5, plasma membrane-type, found in Oryza sativa subsp. japonica (Rice).